A 484-amino-acid polypeptide reads, in one-letter code: PTS system N-acetylmuramic acid-specific EIIBC component (484 aa).

Positions 1–89 constitute a PTS EIIB type-1 domain; the sequence is MAKITTSMIQ…NEMMEGEEDN (89 aa). C28 serves as the catalytic Phosphocysteine intermediate; for EIIB activity. A disordered region spans residues 83–106; the sequence is MEGEEDNSASTTAESRDLKDVASE. Residues 96 to 106 are compositionally biased toward basic and acidic residues; that stretch reads ESRDLKDVASE. Residues 124-484 enclose the PTS EIIC type-1 domain; sequence SKFATIFTPL…FFGTKNVDLS (361 aa). The next 10 membrane-spanning stretches (helical) occupy residues 126–146, 168–188, 194–214, 232–252, 273–293, 312–332, 345–365, 379–399, 404–424, and 451–471; these read FATI…LLGF, LILY…ILIG, AFGG…LGYN, GIDP…GAGV, TLLI…GVLF, ILAG…FVPV, LFPI…ALYA, GSII…VTLP, FITA…VSYM, and IFAG…AGFL.

The protein localises to the cell inner membrane. It catalyses the reaction N-acetyl-beta-D-muramate(out) + N(pros)-phospho-L-histidyl-[protein] = N-acetyl-beta-D-muramate 6-phosphate(in) + L-histidyl-[protein]. Its function is as follows. The phosphoenolpyruvate-dependent sugar phosphotransferase system (sugar PTS), a major carbohydrate active transport system, catalyzes the phosphorylation of incoming sugar substrates concomitantly with their translocation across the cell membrane. This system is involved in N-acetylmuramic acid (MurNAc) transport, yielding cytoplasmic MurNAc-6-P. Is also able to take up anhydro-N-acetylmuramic acid (anhMurNAc), but cannot phosphorylate the carbon 6, probably because of the 1,6-anhydro ring. The sequence is that of PTS system N-acetylmuramic acid-specific EIIBC component (murP) from Aliivibrio fischeri (strain ATCC 700601 / ES114) (Vibrio fischeri).